Consider the following 551-residue polypeptide: Interleukin-2 receptor subunit beta (551 aa).

The first 26 residues, 1 to 26 (MAAPALSWRLPLLILLLPLATPWASA), serve as a signal peptide directing secretion. Over 27–240 (TVNGTSQFTC…TKPASLGKDT (214 aa)) the chain is Extracellular. N-linked (GlcNAc...) asparagine glycosylation is found at N29, N43, and N71. A disulfide bond links C36 and C46. C74 and C86 are disulfide-bonded. The region spanning 134-234 (APISLQVVHV…QPLAFRTKPA (101 aa)) is the Fibronectin type-III domain. A glycan (N-linked (GlcNAc...) asparagine) is linked at N149. The WSXWS motif signature appears at 220–224 (WSPWS). Residues 241 to 265 (IPWLGHLLVGLSGAFGFIILVYLLI) form a helical membrane-spanning segment. The Cytoplasmic portion of the chain corresponds to 266–551 (NCRNTGPWLK…LQGQDPTHLV (286 aa)). A Box 1 motif motif is present at residues 278–286 (LKCHTPDPS). Disordered stretches follow at residues 393-412 (DEGV…QPLS) and 433-476 (SLLG…GPPT).

It belongs to the type I cytokine receptor family. Type 4 subfamily. Non-covalent dimer of an alpha and a beta subunit. IL2R exists in 3 different forms: a high affinity dimer, an intermediate affinity monomer (beta subunit), and a low affinity monomer (alpha subunit). The high and intermediate affinity forms also associate with a gamma subunit. Interacts with SHB upon interleukin stimulation.

It localises to the cell membrane. The protein localises to the cell surface. Functionally, receptor for interleukin-2. This beta subunit is involved in receptor mediated endocytosis and transduces the mitogenic signals of IL2. Probably in association with IL15RA, involved in the stimulation of neutrophil phagocytosis by IL15. This is Interleukin-2 receptor subunit beta (IL2RB) from Pan troglodytes (Chimpanzee).